A 39-amino-acid polypeptide reads, in one-letter code: Photosystem II reaction center protein J (39 aa).

Residues 7-27 (IPLWVVAVIAGLGVIAVVGLF) traverse the membrane as a helical segment.

Belongs to the PsbJ family. PSII is composed of 1 copy each of membrane proteins PsbA, PsbB, PsbC, PsbD, PsbE, PsbF, PsbH, PsbI, PsbJ, PsbK, PsbL, PsbM, PsbT, PsbX, PsbY, PsbZ, Psb30/Ycf12, peripheral proteins PsbO, CyanoQ (PsbQ), PsbU, PsbV and a large number of cofactors. It forms dimeric complexes.

Its subcellular location is the cellular thylakoid membrane. Its function is as follows. One of the components of the core complex of photosystem II (PSII). PSII is a light-driven water:plastoquinone oxidoreductase that uses light energy to abstract electrons from H(2)O, generating O(2) and a proton gradient subsequently used for ATP formation. It consists of a core antenna complex that captures photons, and an electron transfer chain that converts photonic excitation into a charge separation. The sequence is that of Photosystem II reaction center protein J from Gloeothece citriformis (strain PCC 7424) (Cyanothece sp. (strain PCC 7424)).